Here is a 270-residue protein sequence, read N- to C-terminus: Sec-independent protein translocase protein TatC (270 aa).

Transmembrane regions (helical) follow at residues 35–55, 93–113, 124–144, 176–196, 209–229, and 231–251; these read LILS…YRVQ, AFWA…WAFI, WGLP…VFGY, VVTF…AVIL, QGWR…TPTP, and PANM…GVVL.

The protein belongs to the TatC family. Forms a complex with TatA.

The protein resides in the cell membrane. Functionally, part of the twin-arginine translocation (Tat) system that transports large folded proteins containing a characteristic twin-arginine motif in their signal peptide across membranes. The polypeptide is Sec-independent protein translocase protein TatC (Deinococcus radiodurans (strain ATCC 13939 / DSM 20539 / JCM 16871 / CCUG 27074 / LMG 4051 / NBRC 15346 / NCIMB 9279 / VKM B-1422 / R1)).